A 142-amino-acid polypeptide reads, in one-letter code: Dynein light chain Tctex-type protein 2B (142 aa).

Belongs to the dynein light chain Tctex-type family. As to quaternary structure, light chain of the cytoplasmic dynein complex 2, a multisubunit complex composed at least of eleven different proteins. The cytoplasmic dynein 2 complex consists of two catalytic heavy chains (HCs) and a number of non-catalytic subunits presented by intermediate chains (ICs), light intermediate chains (LICs) and light chains (LCs). Among them, a heavy chain (DYNC2H1), two intermediate chains (DYNC2I2 and DYNC2I1), a light intermediate chain (DYNC2LI1), and a light chain (DYNLT2B) are unique to the dynein-2 complex, but a subset of the light chains are also shared by dynein-1 and dynein-2 complexes. Interacts with DYNC2I1. The dimer DYNLT2B-DYNLT1/DYNLT3 interacts with DYNC2I1; this interaction is crucial for retrograde trafficking of ciliary proteins.

It is found in the dynein axonemal particle. Acts as one of several non-catalytic accessory components of the cytoplasmic dynein 2 complex (dynein-2 complex), a motor protein complex that drives the movement of cargos along microtubules within cilia and flagella in concert with the intraflagellar transport (IFT) system. Required for proper retrograde ciliary transport. In Homo sapiens (Human), this protein is Dynein light chain Tctex-type protein 2B.